The chain runs to 644 residues: 1-deoxy-D-xylulose-5-phosphate synthase (644 aa).

Thiamine diphosphate contacts are provided by residues His-84 and 125–127 (GHS). A Mg(2+)-binding site is contributed by Asp-156. Thiamine diphosphate contacts are provided by residues 157 to 158 (GA), Asn-185, Tyr-296, and Glu-378. Asn-185 is a binding site for Mg(2+).

It belongs to the transketolase family. DXPS subfamily. As to quaternary structure, homodimer. Requires Mg(2+) as cofactor. The cofactor is thiamine diphosphate.

It carries out the reaction D-glyceraldehyde 3-phosphate + pyruvate + H(+) = 1-deoxy-D-xylulose 5-phosphate + CO2. Its pathway is metabolic intermediate biosynthesis; 1-deoxy-D-xylulose 5-phosphate biosynthesis; 1-deoxy-D-xylulose 5-phosphate from D-glyceraldehyde 3-phosphate and pyruvate: step 1/1. Functionally, catalyzes the acyloin condensation reaction between C atoms 2 and 3 of pyruvate and glyceraldehyde 3-phosphate to yield 1-deoxy-D-xylulose-5-phosphate (DXP). This chain is 1-deoxy-D-xylulose-5-phosphate synthase, found in Paramagnetospirillum magneticum (strain ATCC 700264 / AMB-1) (Magnetospirillum magneticum).